Here is a 246-residue protein sequence, read N- to C-terminus: Probable transcriptional regulatory protein RD1_2018 (246 aa).

It belongs to the TACO1 family.

The protein localises to the cytoplasm. This Roseobacter denitrificans (strain ATCC 33942 / OCh 114) (Erythrobacter sp. (strain OCh 114)) protein is Probable transcriptional regulatory protein RD1_2018.